A 352-amino-acid polypeptide reads, in one-letter code: tRNA N6-adenosine threonylcarbamoyltransferase (352 aa).

Histidine 111 and histidine 115 together coordinate Fe cation. Substrate contacts are provided by residues 133-137 (LASGG), aspartate 166, glycine 179, and asparagine 275. Residue aspartate 300 coordinates Fe cation.

This sequence belongs to the KAE1 / TsaD family. Fe(2+) serves as cofactor.

It localises to the cytoplasm. It catalyses the reaction L-threonylcarbamoyladenylate + adenosine(37) in tRNA = N(6)-L-threonylcarbamoyladenosine(37) in tRNA + AMP + H(+). Its function is as follows. Required for the formation of a threonylcarbamoyl group on adenosine at position 37 (t(6)A37) in tRNAs that read codons beginning with adenine. Is involved in the transfer of the threonylcarbamoyl moiety of threonylcarbamoyl-AMP (TC-AMP) to the N6 group of A37, together with TsaE and TsaB. TsaD likely plays a direct catalytic role in this reaction. In Treponema pallidum (strain Nichols), this protein is tRNA N6-adenosine threonylcarbamoyltransferase.